Here is a 145-residue protein sequence, read N- to C-terminus: MIALIQRVSQAKVDVDGVTIGAIDKGLLVLLGVEREDDLAKMEKLATKVMSYRVFSDENGKMNLNLEQAGGSLLVVSQFTLAADTGRGLRPSFSGAGTPDQAKTLYDAFVEFCKAKGVTTQTGEFAADMQVSLVNDGPVTFNLQV.

A Gly-cisPro motif, important for rejection of L-amino acids motif is present at residues Gly-137–Pro-138.

Belongs to the DTD family. In terms of assembly, homodimer.

The protein localises to the cytoplasm. It carries out the reaction glycyl-tRNA(Ala) + H2O = tRNA(Ala) + glycine + H(+). The catalysed reaction is a D-aminoacyl-tRNA + H2O = a tRNA + a D-alpha-amino acid + H(+). In terms of biological role, an aminoacyl-tRNA editing enzyme that deacylates mischarged D-aminoacyl-tRNAs. Also deacylates mischarged glycyl-tRNA(Ala), protecting cells against glycine mischarging by AlaRS. Acts via tRNA-based rather than protein-based catalysis; rejects L-amino acids rather than detecting D-amino acids in the active site. By recycling D-aminoacyl-tRNA to D-amino acids and free tRNA molecules, this enzyme counteracts the toxicity associated with the formation of D-aminoacyl-tRNA entities in vivo and helps enforce protein L-homochirality. The chain is D-aminoacyl-tRNA deacylase from Shewanella woodyi (strain ATCC 51908 / MS32).